Reading from the N-terminus, the 369-residue chain is Phosphoserine aminotransferase (369 aa).

An L-glutamate-binding site is contributed by R42. Residues W101, T152, D176, and Q199 each contribute to the pyridoxal 5'-phosphate site. Position 200 is an N6-(pyridoxal phosphate)lysine (K200). 241–242 (NT) serves as a coordination point for pyridoxal 5'-phosphate.

Belongs to the class-V pyridoxal-phosphate-dependent aminotransferase family. SerC subfamily. In terms of assembly, homodimer. Pyridoxal 5'-phosphate serves as cofactor.

It localises to the cytoplasm. The catalysed reaction is O-phospho-L-serine + 2-oxoglutarate = 3-phosphooxypyruvate + L-glutamate. It catalyses the reaction 4-(phosphooxy)-L-threonine + 2-oxoglutarate = (R)-3-hydroxy-2-oxo-4-phosphooxybutanoate + L-glutamate. Its pathway is amino-acid biosynthesis; L-serine biosynthesis; L-serine from 3-phospho-D-glycerate: step 2/3. The protein operates within cofactor biosynthesis; pyridoxine 5'-phosphate biosynthesis; pyridoxine 5'-phosphate from D-erythrose 4-phosphate: step 3/5. Its function is as follows. Catalyzes the reversible conversion of 3-phosphohydroxypyruvate to phosphoserine and of 3-hydroxy-2-oxo-4-phosphonooxybutanoate to phosphohydroxythreonine. In Delftia acidovorans (strain DSM 14801 / SPH-1), this protein is Phosphoserine aminotransferase.